Here is a 101-residue protein sequence, read N- to C-terminus: MEPVDPNLEPWKHPGSQPRTACNNCYCKKCCFHCQVCFTKKGLGISYGRKKRRQRRRPPQDSQTHQSSLSKQPTSQLRGDPTGPTESKKKVERETETDPVH.

Residues 1-24 form an interaction with human CREBBP region; that stretch reads MEPVDPNLEPWKHPGSQPRTACNN. Residues 1–48 are transactivation; the sequence is MEPVDPNLEPWKHPGSQPRTACNNCYCKKCCFHCQVCFTKKGLGISYG. Positions 22, 25, and 27 each coordinate Zn(2+). The cysteine-rich stretch occupies residues 22–37; it reads CNNCYCKKCCFHCQVC. Lys28 is subject to N6-acetyllysine; by host PCAF. Positions 30, 33, 34, and 37 each coordinate Zn(2+). A core region spans residues 38-48; it reads FTKKGLGISYG. Residues 47–101 form a disordered region; the sequence is YGRKKRRQRRRPPQDSQTHQSSLSKQPTSQLRGDPTGPTESKKKVERETETDPVH. Residues 48-57 show a composition bias toward basic residues; that stretch reads GRKKRRQRRR. The Nuclear localization signal, RNA-binding (TAR), and protein transduction motif lies at 49–57; that stretch reads RKKRRQRRR. An interaction with the host capping enzyme RNGTT region spans residues 49 to 86; it reads RKKRRQRRRPPQDSQTHQSSLSKQPTSQLRGDPTGPTE. 2 positions are modified to N6-acetyllysine; by host EP300 and GCN5L2: Lys50 and Lys51. An asymmetric dimethylarginine; by host PRMT6 mark is found at Arg52 and Arg53. The segment covering 61 to 77 has biased composition (polar residues); the sequence is DSQTHQSSLSKQPTSQL. Lys71 is covalently cross-linked (Glycyl lysine isopeptide (Lys-Gly) (interchain with G-Cter in ubiquitin)). The short motif at 78–80 is the Cell attachment site element; that stretch reads RGD. A compositionally biased stretch (basic and acidic residues) spans 86–101; sequence ESKKKVERETETDPVH.

Belongs to the lentiviruses Tat family. As to quaternary structure, interacts with host CCNT1. Associates with the P-TEFb complex composed at least of Tat, P-TEFb (CDK9 and CCNT1), TAR RNA, RNA Pol II. Recruits the HATs CREBBP, TAF1/TFIID, EP300, PCAF and GCN5L2. Interacts with host KAT5/Tip60; this interaction targets the latter to degradation. Interacts with the host deacetylase SIRT1. Interacts with host capping enzyme RNGTT; this interaction stimulates RNGTT. Binds to host KDR, and to the host integrins ITGAV/ITGB3 and ITGA5/ITGB1. Interacts with host KPNB1/importin beta-1 without previous binding to KPNA1/importin alpha-1. Interacts with EIF2AK2. Interacts with host nucleosome assembly protein NAP1L1; this interaction may be required for the transport of Tat within the nucleus, since the two proteins interact at the nuclear rim. Interacts with host C1QBP/SF2P32; this interaction involves lysine-acetylated Tat. Interacts with the host chemokine receptors CCR2, CCR3 and CXCR4. Interacts with host DPP4/CD26; this interaction may trigger an anti-proliferative effect. Interacts with host LDLR. Interacts with the host extracellular matrix metalloproteinase MMP1. Interacts with host PRMT6; this interaction mediates Tat's methylation. Interacts with, and is ubiquitinated by MDM2/Hdm2. Interacts with host PSMC3 and HTATIP2. Interacts with STAB1; this interaction may overcome SATB1-mediated repression of IL2 and IL2RA (interleukin) in T cells by binding to the same domain than HDAC1. Interacts (when acetylated) with human CDK13, thereby increasing HIV-1 mRNA splicing and promoting the production of the doubly spliced HIV-1 protein Nef. Interacts with host TBP; this interaction modulates the activity of transcriptional pre-initiation complex. Interacts with host RELA. Interacts with host PLSCR1; this interaction negatively regulates Tat transactivation activity by altering its subcellular distribution. Post-translationally, asymmetrical arginine methylation by host PRMT6 seems to diminish the transactivation capacity of Tat and affects the interaction with host CCNT1. Acetylation by EP300, CREBBP, GCN5L2/GCN5 and PCAF regulates the transactivation activity of Tat. EP300-mediated acetylation of Lys-50 promotes dissociation of Tat from the TAR RNA through the competitive binding to PCAF's bromodomain. In addition, the non-acetylated Tat's N-terminus can also interact with PCAF. PCAF-mediated acetylation of Lys-28 enhances Tat's binding to CCNT1. Lys-50 is deacetylated by SIRT1. In terms of processing, polyubiquitination by host MDM2 does not target Tat to degradation, but activates its transactivation function and fosters interaction with CCNT1 and TAR RNA. Post-translationally, phosphorylated by EIF2AK2 on serine and threonine residues adjacent to the basic region important for TAR RNA binding and function. Phosphorylation of Tat by EIF2AK2 is dependent on the prior activation of EIF2AK2 by dsRNA.

The protein localises to the host nucleus. The protein resides in the host nucleolus. It is found in the host cytoplasm. Its subcellular location is the secreted. Its function is as follows. Transcriptional activator that increases RNA Pol II processivity, thereby increasing the level of full-length viral transcripts. Recognizes a hairpin structure at the 5'-LTR of the nascent viral mRNAs referred to as the transactivation responsive RNA element (TAR) and recruits the cyclin T1-CDK9 complex (P-TEFb complex) that will in turn hyperphosphorylate the RNA polymerase II to allow efficient elongation. The CDK9 component of P-TEFb and other Tat-activated kinases hyperphosphorylate the C-terminus of RNA Pol II that becomes stabilized and much more processive. Other factors such as HTATSF1/Tat-SF1, SUPT5H/SPT5, and HTATIP2 are also important for Tat's function. Besides its effect on RNA Pol II processivity, Tat induces chromatin remodeling of proviral genes by recruiting the histone acetyltransferases (HATs) CREBBP, EP300 and PCAF to the chromatin. This also contributes to the increase in proviral transcription rate, especially when the provirus integrates in transcriptionally silent region of the host genome. To ensure maximal activation of the LTR, Tat mediates nuclear translocation of NF-kappa-B by interacting with host RELA. Through its interaction with host TBP, Tat may also modulate transcription initiation. Tat can reactivate a latently infected cell by penetrating in it and transactivating its LTR promoter. In the cytoplasm, Tat is thought to act as a translational activator of HIV-1 mRNAs. Extracellular circulating Tat can be endocytosed by surrounding uninfected cells via the binding to several surface receptors such as CD26, CXCR4, heparan sulfate proteoglycans (HSPG) or LDLR. Neurons are rarely infected, but they internalize Tat via their LDLR. Through its interaction with nuclear HATs, Tat is potentially able to control the acetylation-dependent cellular gene expression. Modulates the expression of many cellular genes involved in cell survival, proliferation or in coding for cytokines or cytokine receptors. Tat plays a role in T-cell and neurons apoptosis. Tat induced neurotoxicity and apoptosis probably contribute to neuroAIDS. Circulating Tat also acts as a chemokine-like and/or growth factor-like molecule that binds to specific receptors on the surface of the cells, affecting many cellular pathways. In the vascular system, Tat binds to ITGAV/ITGB3 and ITGA5/ITGB1 integrins dimers at the surface of endothelial cells and competes with bFGF for heparin-binding sites, leading to an excess of soluble bFGF. This is Protein Tat from Human immunodeficiency virus type 1 group M subtype B (isolate YU-2) (HIV-1).